The chain runs to 288 residues: Shikimate dehydrogenase (NADP(+)) (288 aa).

Residues 15–17 (SKS) and Thr-64 contribute to the shikimate site. Catalysis depends on Lys-68, which acts as the Proton acceptor. Glu-83 lines the NADP(+) pocket. The shikimate site is built by Asn-92 and Asp-117. NADP(+) is bound by residues 141–145 (GAGGA), 165–170 (NRTLSK), and Met-232. Residue Tyr-234 coordinates shikimate. Gly-254 provides a ligand contact to NADP(+).

This sequence belongs to the shikimate dehydrogenase family. Homodimer.

It catalyses the reaction shikimate + NADP(+) = 3-dehydroshikimate + NADPH + H(+). It participates in metabolic intermediate biosynthesis; chorismate biosynthesis; chorismate from D-erythrose 4-phosphate and phosphoenolpyruvate: step 4/7. Its function is as follows. Involved in the biosynthesis of the chorismate, which leads to the biosynthesis of aromatic amino acids. Catalyzes the reversible NADPH linked reduction of 3-dehydroshikimate (DHSA) to yield shikimate (SA). This is Shikimate dehydrogenase (NADP(+)) from Psychrobacter arcticus (strain DSM 17307 / VKM B-2377 / 273-4).